The sequence spans 940 residues: MSDYKFTLNLPETEFPMRGNLANREPEMLERWTKDGLYQQIRDSRIGRTPFILHDGPPYANGSIHIGHSVNKILKDIIVKSKTMSGFDAPYVPGWDCHGLPIELKVEQKVGKPGQKISAAEFREECRKYAAEQVDGQRADFIRLGVLGDWQKPYLTMDFATEANIVRSLSKVIENGHLHKGVKPVHWCTDCGSALAEAEVEYEDKTSPAIDVAFTATDSKALAAQFGVSDYSHPVAMVIWTTTPWTLPANRALSISPELDYSLVEFAKEGATHAVILADVLVEACMTRYGAESHSVLGKVKGVALELVRFKHPFLAFDVPAILGDHVTTDAGTGVVHTAPGHGQDDFVVGQKYGLEVANPVGDNGVYKPDTEFFAGQHVFKANDNVVALLKEKGALLHHVAYRHSYPHCWRHKTPIIFRATPQWFISMDNQNLRKQALSEIEQTQWIPDWGQSRIEKMVENRPDWCISRQRTWGVPITLFVHRETEELHPDSVSLMARVANRIEQEGIQAWWDLDAAELLGEEAEQYRKVTDTLDVWYDSGSTFASVVGARPEFHGHGVDLYLEGSDQHRGWFMSSLMISTAMTGKAPYKQVLTHGFTVDGKGRKMSKSIGNVIAPQQVTNKLGADILRLWVAATDYSGEMTVSDEILNRSADAYRRIRNTARFLLANLNGFDPAKDLVAVEDMVALDRWAVRRAAALQQEIIEAYEQYNFHIVTQKLMQFCSVELGSFYLDIIKDRQYTAKQEGHARRSCQSALFHIAEAMVRWIAPILSFTADEVWQLLPGQRDAYVFTQEWYQDLQSITLDTDLSDAYWENLLTVRNEVNKVIEQARRDKRIGGSLDAEVTLFADAALTEQLTHIGDELRFVLLTSEAKVLPLADATSDAVETELASLKLEVNATTAEKCERCWHHREEVGTIEAHPTLCHRCVTNIEGDGEVRLFA.

A 'HIGH' region motif is present at residues 58 to 68; that stretch reads PYANGSIHIGH. L-isoleucyl-5'-AMP is bound at residue Glu-564. The 'KMSKS' region signature appears at 605 to 609; sequence KMSKS. Lys-608 is a binding site for ATP. Cys-903, Cys-906, Cys-923, and Cys-926 together coordinate Zn(2+).

Belongs to the class-I aminoacyl-tRNA synthetase family. IleS type 1 subfamily. Monomer. It depends on Zn(2+) as a cofactor.

It localises to the cytoplasm. It catalyses the reaction tRNA(Ile) + L-isoleucine + ATP = L-isoleucyl-tRNA(Ile) + AMP + diphosphate. Functionally, catalyzes the attachment of isoleucine to tRNA(Ile). As IleRS can inadvertently accommodate and process structurally similar amino acids such as valine, to avoid such errors it has two additional distinct tRNA(Ile)-dependent editing activities. One activity is designated as 'pretransfer' editing and involves the hydrolysis of activated Val-AMP. The other activity is designated 'posttransfer' editing and involves deacylation of mischarged Val-tRNA(Ile). This is Isoleucine--tRNA ligase from Shewanella sp. (strain ANA-3).